We begin with the raw amino-acid sequence, 2327 residues long: Voltage-dependent N-type calcium channel subunit alpha-1B (2327 aa).

The segment at 1–37 (MVRFGDELGGRYGGTGGGERARGGGAGGAGGPGQGGL) is disordered. The Cytoplasmic portion of the chain corresponds to 1-90 (MVRFGDELGG…DNVVRKYAKR (90 aa)). Over residues 10–37 (GRYGGTGGGERARGGGAGGAGGPGQGGL) the composition is skewed to gly residues. At arginine 22 the chain carries Omega-N-methylarginine. Residues 82–359 (NVVRKYAKRI…LVLGVLSGEF (278 aa)) form an I repeat. A helical membrane pass occupies residues 91–114 (ITEWPPFEYMILATIIANCIVLAL). Topologically, residues 115-131 (EQHLPDGDKTPMSERLD) are extracellular. A helical membrane pass occupies residues 132-152 (DTEPYFIGIFCFEAGIKIIAL). Residues 153–163 (GFVFHKGSYLR) are Cytoplasmic-facing. Residues 164–182 (NGWNVMDFVVVLTGILATA) form a helical membrane-spanning segment. The Extracellular segment spans residues 183 to 187 (GTDFD). The chain crosses the membrane as a helical span at residues 188–211 (LRTLRAVRVLRPLKLVSGIPSLQV). Over 212–221 (VLKSIMKAMV) the chain is Cytoplasmic. The helical transmembrane segment at 222–244 (PLLQIGLLLFFAILMFAIIGLEF) threads the bilayer. Residues 245-331 (YMGKFHKACF…NTNDAAGNTW (87 aa)) are Extracellular-facing. The N-linked (GlcNAc...) asparagine glycan is linked to asparagine 256. A helical membrane pass occupies residues 332–356 (NWLYFIPLIIIGSFFMLNLVLGVLS). The Cytoplasmic segment spans residues 357 to 482 (GEFAKERERV…FFIRRMVKAQ (126 aa)). Positions 379 to 396 (QQIERELNGYLEWIFKAE) are binding to the beta subunit. Phosphoserine is present on serine 411. ATP is bound at residue 451–458 (ASLKSGKT). One copy of the II repeat lies at 468–712 (EKMFRFFIRR…VFLAIAVDNL (245 aa)). A helical transmembrane segment spans residues 483 to 501 (SFYWVVLCVVALNTLCVAM). Topologically, residues 502–511 (VHYNQPQRLT) are extracellular. Residues 512–534 (TALYFAEFVFLGLFLTEMSLKMY) traverse the membrane as a helical segment. Residues 535 to 544 (GLGPRSYFRS) are Cytoplasmic-facing. Serine 544 provides a ligand contact to a 1,2-diacyl-sn-glycero-3-phospho-(1D-myo-inositol-4,5-bisphosphate). The helical transmembrane segment at 545–566 (SFNCFDFGVIVGSIFEVVWAAI) threads the bilayer. The Extracellular segment spans residues 567–573 (KPGTSFG). Residues 574-586 (ISVLRALRLLRIF) traverse the membrane as a helical segment. Arginine 584 and lysine 587 together coordinate a 1,2-diacyl-sn-glycero-3-phospho-(1D-myo-inositol-4,5-bisphosphate). Residues 587–604 (KVTKYWNSLRNLVVSLLN) are Cytoplasmic-facing. The helical transmembrane segment at 605–630 (SMKSIISLLFLLFLFIVVFALLGMQL) threads the bilayer. At 631-682 (FGGQFNFQDETPTTNFDTFPAAILTVFQILTGEDWNAVMYHGIESQGGVSKG) the chain is on the extracellular side. The helical transmembrane segment at 683–709 (MFSSFYFIVLTLFGNYTLLNVFLAIAV) threads the bilayer. The Cytoplasmic segment spans residues 710–1140 (DNLANAQELT…FCHYIVTMRY (431 aa)). A phosphoserine mark is found at serine 745, serine 748, and serine 783. 2 disordered regions span residues 802–1015 (TRHV…KEPH) and 1042–1066 (EQPE…PSTT). 5 stretches are compositionally biased toward basic and acidic residues: residues 805 to 826 (VRPD…RDGL), 869 to 885 (EQDR…EERA), 914 to 924 (GSPEEATEREP), 961 to 972 (GPREAENNEEPT), and 988 to 1015 (PERE…KEPH). A compositionally biased stretch (polar residues) spans 1050–1066 (QRNVTRMGSQPSDPSTT). Residue serine 1058 is modified to Phosphoserine. An III repeat occupies 1126–1412 (NLLRRFCHYI…IFVALIIITF (287 aa)). A helical transmembrane segment spans residues 1141–1159 (FEMVILVVIALSSIALAAE). Residues 1160-1167 (DPVRTDSF) are Extracellular-facing. The chain crosses the membrane as a helical span at residues 1168–1192 (RNNALKYMDYIFTGVFTFEMVIKMI). At 1193–1206 (DLGLLLHPGAYFRD) the chain is on the cytoplasmic side. A helical membrane pass occupies residues 1207–1231 (LWNILDFIVVSGALVAFAFSSFMGG). At 1232-1237 (SKGKDI) the chain is on the extracellular side. A helical membrane pass occupies residues 1238–1258 (NTIKSLRVLRVLRPLKTIKRL). The Cytoplasmic segment spans residues 1259–1276 (PKLKAVFDCVVNSLKNVL). The chain crosses the membrane as a helical span at residues 1277–1296 (NILIVYMLFMFIFAVIAVQL). Residues 1297-1383 (FKGKFFYCTD…EQGPSPGFRM (87 aa)) lie on the Extracellular side of the membrane. The chain crosses the membrane as a helical span at residues 1384–1409 (ELSIFYVVYFVVFPFFFVNIFVALII). Residues 1410–1464 (ITFQEQGDKVMSECSLEKNERACIDFAISAKPLTRYMPQNKQSFQYKTWTFVVSP) are Cytoplasmic-facing. Residues 1449–1702 (NKQSFQYKTW…LFVAVIMDNF (254 aa)) form an IV repeat. A helical membrane pass occupies residues 1465 to 1483 (PFEYFIMAMIALNTVVLMM). At 1484–1491 (KFYDAPYE) the chain is on the extracellular side. Residues 1492-1516 (YELMLKCLNIVFTSMFSMECILKII) traverse the membrane as a helical segment. The Cytoplasmic segment spans residues 1517–1526 (AFGVLNYFRD). The chain crosses the membrane as a helical span at residues 1527–1548 (AWNVFDFVTVLGSITDILVTEI). The Extracellular segment spans residues 1549-1554 (ANNFIN). Asparagine 1554 is a glycosylation site (N-linked (GlcNAc...) asparagine). A helical membrane pass occupies residues 1555–1573 (LSFLRLFRAARLIKLLRQG). Over 1574–1592 (YTIRILLWTFVQSFKALPY) the chain is Cytoplasmic. The chain crosses the membrane as a helical span at residues 1593 to 1612 (VCLLIAMLFFIYAIIGMQVF). At 1613 to 1674 (GNIALDDDTS…ANASECGSDF (62 aa)) the chain is on the extracellular side. N-linked (GlcNAc...) asparagine glycosylation is present at asparagine 1666. The helical transmembrane segment at 1675–1698 (AYFYFVSFIFLCSFLMLNLFVAVI) threads the bilayer. Residues 1699–2327 (MDNFEYLTRD…YHHPDQDHWC (629 aa)) lie on the Cytoplasmic side of the membrane. The region spanning 1715-1750 (HHLDEFIRVWAEYDPAACGRISYNDMFEMLKHMSPP) is the EF-hand domain. The Ca(2+) site is built by aspartate 1728, arginine 1734, and aspartate 1739. The tract at residues 1972–2193 (TLRGPDGEPQ…TPRPSITYKT (222 aa)) is disordered. The segment covering 2039–2053 (SHHHHHRCHRRRDKK) has biased composition (basic residues). A Phosphoserine modification is found at serine 2056. Basic and acidic residues predominate over residues 2088–2104 (CRRDRKQERGRSQERRQ). Composition is skewed to polar residues over residues 2131 to 2141 (PSLSSHPTSPT) and 2152 to 2168 (GSGS…SGAS). A phosphoserine mark is found at serine 2212, serine 2221, and serine 2244. Disordered regions lie at residues 2230–2249 (EPLS…PYLG) and 2273–2292 (ATNS…TSQS). The segment covering 2276-2292 (SGRSSRTSYVSSLTSQS) has biased composition (low complexity).

It belongs to the calcium channel alpha-1 subunit (TC 1.A.1.11) family. CACNA1B subfamily. In terms of assembly, multisubunit complex consisting of alpha-1, alpha-2, beta and delta subunits in a 1:1:1:1 ratio. The channel activity is directed by the pore-forming and voltage-sensitive alpha-1 subunit. In many cases, this subunit is sufficient to generate voltage-sensitive calcium channel activity. The auxiliary subunits beta and alpha-2/delta linked by a disulfide bridge regulate the channel activity. Interacts with RIMS1. Interacts with FMR1 (via C-terminus); this interaction induces a decrease in the number of presynaptic functional CACNA1B channels at the cell surface. Post-translationally, phosphorylated in vitro by CaM-kinase II, PKA, PKC and CGPK. As to expression, widespread expression throughout the brain. Highest levels in pyramidal cell layers C1, C2 and C3 of the hippocampus, in the dentate gyrus, in the cortex layers 2 et 4, in the subiculum and the habenula.

It localises to the membrane. The enzyme catalyses Ca(2+)(in) = Ca(2+)(out). Its activity is regulated as follows. Is specifically blocked by omega-conotoxin GVIA. Is specifically blocked by omega-conotoxin MVIIA (ziconotide). Is insensitive to dihydropyridines (DHP). Voltage-sensitive calcium channels (VSCC) mediate the entry of calcium ions into excitable cells and are also involved in a variety of calcium-dependent processes, including muscle contraction, hormone or neurotransmitter release, gene expression, cell motility, cell division and cell death. This alpha-1B subunit gives rise to N-type calcium currents. N-type calcium channels belong to the 'high-voltage activated' (HVA) group. They are involved in pain signaling. Calcium channels containing alpha-1B subunit may play a role in directed migration of immature neurons. Mediates Ca(2+) release probability at hippocampal neuronal soma and synaptic terminals. This chain is Voltage-dependent N-type calcium channel subunit alpha-1B (Cacna1b), found in Mus musculus (Mouse).